The chain runs to 430 residues: Serine hydroxymethyltransferase (430 aa).

Position 120–122 (120–122 (GHI)) interacts with (6S)-5,6,7,8-tetrahydrofolate. N6-(pyridoxal phosphate)lysine is present on Lys-226.

This sequence belongs to the SHMT family. Homodimer. Pyridoxal 5'-phosphate is required as a cofactor.

The protein resides in the cytoplasm. The protein operates within amino-acid biosynthesis; glycine biosynthesis; glycine from L-serine: step 1/1. Functionally, catalyzes the reversible interconversion of serine and glycine with a modified folate serving as the one-carbon carrier. Also exhibits a pteridine-independent aldolase activity toward beta-hydroxyamino acids, producing glycine and aldehydes, via a retro-aldol mechanism. This Pyrobaculum neutrophilum (strain DSM 2338 / JCM 9278 / NBRC 100436 / V24Sta) (Thermoproteus neutrophilus) protein is Serine hydroxymethyltransferase.